A 247-amino-acid chain; its full sequence is 5'-nucleotidase SurE (247 aa).

A divalent metal cation-binding residues include D8, D9, S39, and N91.

The protein belongs to the SurE nucleotidase family. A divalent metal cation is required as a cofactor.

The protein resides in the cytoplasm. The catalysed reaction is a ribonucleoside 5'-phosphate + H2O = a ribonucleoside + phosphate. Nucleotidase that shows phosphatase activity on nucleoside 5'-monophosphates. In Nitrosomonas eutropha (strain DSM 101675 / C91 / Nm57), this protein is 5'-nucleotidase SurE.